Consider the following 166-residue polypeptide: MEAGPHPRPGHCCKPGGRLDMNHGFVHHIRRNQIARDDYDKKVKQAAKEKVRRRHTPAPTRPRKPDLQVYLPRHRDVSAHPRNPDYEESGESSSSGGSELEPSGHQLFCLEYEADSGEVTSVIVYQGDDPGKVSEKVSAHTPLDPPMREALKLRIQEEIAKRQSQH.

The interval 32 to 107 (NQIARDDYDK…SELEPSGHQL (76 aa)) is disordered. Composition is skewed to basic and acidic residues over residues 34 to 49 (IARD…AAKE) and 73 to 85 (RHRD…RNPD). A compositionally biased stretch (low complexity) spans 91 to 104 (ESSSSGGSELEPSG).

This sequence belongs to the UPF0561 family.

The sequence is that of UPF0561 protein C2orf68 (C2orf68) from Homo sapiens (Human).